A 241-amino-acid polypeptide reads, in one-letter code: Thiamine import ATP-binding protein ThiQ (241 aa).

The region spanning 2 to 239 is the ABC transporter domain; the sequence is IQLDKLNHCY…PKDEVLIQYL (238 aa). Residue 41–48 participates in ATP binding; the sequence is GPSGAGKS.

It belongs to the ABC transporter superfamily. Thiamine importer (TC 3.A.1.19.1) family. The complex is composed of two ATP-binding proteins (ThiQ), two transmembrane proteins (ThiP) and a solute-binding protein (ThiB).

It localises to the cell inner membrane. It carries out the reaction thiamine(out) + ATP + H2O = thiamine(in) + ADP + phosphate + H(+). In terms of biological role, part of the ABC transporter complex ThiBPQ involved in thiamine import. Responsible for energy coupling to the transport system. The polypeptide is Thiamine import ATP-binding protein ThiQ (Photobacterium profundum (strain SS9)).